A 302-amino-acid polypeptide reads, in one-letter code: tRNA dimethylallyltransferase 1 (302 aa).

6 to 13 (GPTACGKT) contacts ATP. 8–13 (TACGKT) provides a ligand contact to substrate. 2 interaction with substrate tRNA regions span residues 31 to 34 (DSRQ) and 154 to 158 (QRAIR).

The protein belongs to the IPP transferase family. Monomer. It depends on Mg(2+) as a cofactor.

It carries out the reaction adenosine(37) in tRNA + dimethylallyl diphosphate = N(6)-dimethylallyladenosine(37) in tRNA + diphosphate. In terms of biological role, catalyzes the transfer of a dimethylallyl group onto the adenine at position 37 in tRNAs that read codons beginning with uridine, leading to the formation of N6-(dimethylallyl)adenosine (i(6)A). This chain is tRNA dimethylallyltransferase 1, found in Porphyromonas gingivalis (strain ATCC 33277 / DSM 20709 / CIP 103683 / JCM 12257 / NCTC 11834 / 2561).